The sequence spans 52 residues: NPEDWFTPDTCAYGDSNTAWTTCTTPGQTCYTCCSSCFDVVGEQACQMSAQC.

4 cysteine pairs are disulfide-bonded: cysteine 11–cysteine 37, cysteine 23–cysteine 33, cysteine 30–cysteine 52, and cysteine 34–cysteine 46.

It localises to the secreted. Mating ciliate pheromones (or gamones) are diffusible extracellular communication signals that distinguish different intraspecific classes of cells commonly referred to as 'mating types'. They prepare the latter for conjugation by changing their cell surface properties. This Euplotes nobilii (Ciliate) protein is Mating pheromone En-1.